Here is a 273-residue protein sequence, read N- to C-terminus: Bifunctional protein FolD (273 aa).

NADP(+)-binding positions include 152 to 154 (GRS), Thr179, and Ile220.

It belongs to the tetrahydrofolate dehydrogenase/cyclohydrolase family. As to quaternary structure, homodimer.

It catalyses the reaction (6R)-5,10-methylene-5,6,7,8-tetrahydrofolate + NADP(+) = (6R)-5,10-methenyltetrahydrofolate + NADPH. The catalysed reaction is (6R)-5,10-methenyltetrahydrofolate + H2O = (6R)-10-formyltetrahydrofolate + H(+). Its pathway is one-carbon metabolism; tetrahydrofolate interconversion. In terms of biological role, catalyzes the oxidation of 5,10-methylenetetrahydrofolate to 5,10-methenyltetrahydrofolate and then the hydrolysis of 5,10-methenyltetrahydrofolate to 10-formyltetrahydrofolate. This Petrotoga mobilis (strain DSM 10674 / SJ95) protein is Bifunctional protein FolD.